A 104-amino-acid chain; its full sequence is MVNMAPNTNFASLVAVAGCVLLGYNYYTGNIFCGVIGSLLLFGALWSLNGGKIWGIISFIISASIFCYINWDFILNLLFYSIIAFIVMSILILIFGNNRGGYYY.

A run of 2 helical transmembrane segments spans residues 53-73 (IWGI…NWDF) and 74-94 (ILNL…LILI).

It is found in the cell membrane. This is an uncharacterized protein from Methanocaldococcus jannaschii (strain ATCC 43067 / DSM 2661 / JAL-1 / JCM 10045 / NBRC 100440) (Methanococcus jannaschii).